A 226-amino-acid polypeptide reads, in one-letter code: 2,3-bisphosphoglycerate-dependent phosphoglycerate mutase (226 aa).

Substrate is bound by residues 8–15, 21–22, Arg-58, 109–112, Lys-120, 136–137, and 180–181; these read RHGQSVWN, TG, ERMY, RR, and GN. His-9 (tele-phosphohistidine intermediate) is an active-site residue. The Proton donor/acceptor role is filled by Glu-109.

The protein belongs to the phosphoglycerate mutase family. BPG-dependent PGAM subfamily.

The enzyme catalyses (2R)-2-phosphoglycerate = (2R)-3-phosphoglycerate. It participates in carbohydrate degradation; glycolysis; pyruvate from D-glyceraldehyde 3-phosphate: step 3/5. Its function is as follows. Catalyzes the interconversion of 2-phosphoglycerate and 3-phosphoglycerate. In Chlamydia trachomatis serovar L2 (strain ATCC VR-902B / DSM 19102 / 434/Bu), this protein is 2,3-bisphosphoglycerate-dependent phosphoglycerate mutase.